The chain runs to 401 residues: Nicotinate phosphoribosyltransferase (401 aa).

A Phosphohistidine; by autocatalysis modification is found at His-224.

Belongs to the NAPRTase family. Transiently phosphorylated on a His residue during the reaction cycle. Phosphorylation strongly increases the affinity for substrates and increases the rate of nicotinate D-ribonucleotide production. Dephosphorylation regenerates the low-affinity form of the enzyme, leading to product release.

The enzyme catalyses nicotinate + 5-phospho-alpha-D-ribose 1-diphosphate + ATP + H2O = nicotinate beta-D-ribonucleotide + ADP + phosphate + diphosphate. It participates in cofactor biosynthesis; NAD(+) biosynthesis; nicotinate D-ribonucleotide from nicotinate: step 1/1. Functionally, catalyzes the synthesis of beta-nicotinate D-ribonucleotide from nicotinate and 5-phospho-D-ribose 1-phosphate at the expense of ATP. In Pseudomonas putida (strain ATCC 700007 / DSM 6899 / JCM 31910 / BCRC 17059 / LMG 24140 / F1), this protein is Nicotinate phosphoribosyltransferase.